The chain runs to 395 residues: MKLILTVLAFLSLQVALSDDVGRLYEWSKIDIVGVRPSVYDSSNIIPTGVAYDADSKMLFFGLPRKYSKVPITVAQLSTRSYNSAERRDPPLDKFSGKSKKPLTSVYQPVIDDCRRLWVLDVGIVEVKAERKTYPTKNPALVAFDLTKPDYPEIHRYELTGDAAKTPLGYGGFAVDVVNPKKCGKNDEKTYVYIANFVENSLIVYDKKKSDAWVLKDDSFKPEGVSTYTHNGKEHELKTGIFGIALGDRNKEGNRPAYYLAGSSTKLYRLDTKLLKKKGSKLVPKLIGDRGYKTEAIALAYDPETKVLFFAETDSRQVSCWNIKKELKPENVGVIYSSAKLNFATDMMVDSKGFLWFMSNGQPPFDEKMKYEDPHIRLMKVKTKKAIKGEKRCQG.

An N-terminal signal peptide occupies residues 1–18; sequence MKLILTVLAFLSLQVALS.

The protein belongs to the major royal jelly protein family. Salivary gland (at protein level).

It is found in the secreted. In terms of biological role, probably modulates blood feeding of sand flies on vertebrate species by binding and sequestering different mediators involved in the host response. Functions as a chemoattractant for host neutrophils; likely acts through a G-protein-coupled receptor and effect is dependent on calcium influx and phosphatidylinositol 3-kinases (PI3K) activity. Functionally, (Microbial infection) Probably enhances infection caused by Leishmania species in the host through augmentation of host neutrophil recruitment into the skin. The protein is Yellow-related salivary protein M35 of Phlebotomus duboscqi (Sandfly).